The sequence spans 239 residues: Small ribosomal subunit protein uS3 (239 aa).

One can recognise a KH type-2 domain in the interval R40–N108. The interval K212–E239 is disordered. The span at A215–P226 shows a compositional bias: basic and acidic residues. Over residues R227–E239 the composition is skewed to basic residues.

This sequence belongs to the universal ribosomal protein uS3 family. As to quaternary structure, part of the 30S ribosomal subunit. Forms a tight complex with proteins S10 and S14.

In terms of biological role, binds the lower part of the 30S subunit head. Binds mRNA in the 70S ribosome, positioning it for translation. In Thermus thermophilus (strain ATCC BAA-163 / DSM 7039 / HB27), this protein is Small ribosomal subunit protein uS3 (rpsC).